We begin with the raw amino-acid sequence, 372 residues long: MNASTTSKKPVIQLKGLNKSFDGKQIIAGLDLNVNDGEFLTILGPSGCGKTTVLRLIAGFENSDAGQVIIANKDVTQVPAEQRHVNTVFQSYALFPHMTVFENVAFGLRMQKVSESEIEPRVMDALRMVQLDKFAPRKPHQLSGGQQQRVAIARAVVNKPKVLLLDESLSALDYKLRKQMQLELKQLQRKLGITFIFVTHDQEEALSMSDRIIVMRDGNIEQDGSPREIYEEPTNLFVARFIGEINVFDATVKERLDEKRIMAEVEGRTAQIHCELAVKTGDKLKVLLRPEDIRLEEINNDEHAKGIIGYVRERTYKGMTLDSVIELESGMSVMVSEFFNEDDPDVDHSLNQKVAVTWVESWEVVLADEQEA.

Residues 12-242 (IQLKGLNKSF…PTNLFVARFI (231 aa)) form the ABC transporter domain. 44–51 (GPSGCGKT) contributes to the ATP binding site.

This sequence belongs to the ABC transporter superfamily. Spermidine/putrescine importer (TC 3.A.1.11.1) family. In terms of assembly, the complex is composed of two ATP-binding proteins (PotA), two transmembrane proteins (PotB and PotC) and a solute-binding protein (PotD).

The protein resides in the cell inner membrane. The catalysed reaction is ATP + H2O + polyamine-[polyamine-binding protein]Side 1 = ADP + phosphate + polyamineSide 2 + [polyamine-binding protein]Side 1.. In terms of biological role, part of the ABC transporter complex PotABCD involved in spermidine/putrescine import. Responsible for energy coupling to the transport system. The polypeptide is Spermidine/putrescine import ATP-binding protein PotA (Photobacterium profundum (strain SS9)).